The chain runs to 375 residues: MAPGETEREAGPAKSALQKVRRATLVINLARGWQQWANENSTRQAQEPAGWLPGATQDLPHTPKEPGPRQHAPKPPSPKPDGDREGRGSEEATEVSHIKRKEVTRTVVSKAYERGGDVNYLSHRYEHDGGVSEAVQPDNDIDRILLSHDSPTRRRKCTNLVSELTKGWKVMEQEEPKWKSDSIDTEDSGYGGDMEERPEQDVAQVAAARIKRPLHSQANRYSETLNCKAHRKYSQVDNLKGRWQQWADEHIQSQKLNPFSDEFDYDLAMSTRLHKGDEGYGRPKEGSKTAERAKRAEEHIYREIMELCFVIRTMARHRRDGKIQVTFGELFDRYVRISDKVVGILMRARKHGLVHFEGEMLWQGKDDHVVITLLE.

Residues 37 to 101 (ANENSTRQAQ…ATEVSHIKRK (65 aa)) form a disordered region. Basic and acidic residues predominate over residues 80–101 (PDGDREGRGSEEATEVSHIKRK). Residues S150 and S182 each carry the phosphoserine modification. A disordered region spans residues 175-197 (EPKWKSDSIDTEDSGYGGDMEER). 2 actin-binding regions span residues 193 to 293 (DMEE…AERA) and 294 to 375 (KRAE…TLLE). Interaction with actin regions lie at residues 234-279 (SQVD…GDEG) and 346-375 (MRAR…TLLE).

Binds F-actin and ABLIM1, ABLIM2 and ABLIM3. Interaction with ABLIM2 and ABLIM3 enhances activity. As to expression, predominantly expressed in heart and skeletal muscle, and expressed at lower levels in adrenal gland, brain, kidney, liver, and testis.

The protein localises to the cytoplasm. It localises to the myofibril. Its subcellular location is the sarcomere. The protein resides in the cytoskeleton. Its function is as follows. Acts as an activator of serum response factor (SRF)-dependent transcription possibly by inducing nuclear translocation of MKL1 or MKL2 and through a mechanism requiring Rho-actin signaling. The chain is Actin-binding Rho-activating protein from Rattus norvegicus (Rat).